Reading from the N-terminus, the 301-residue chain is Probable DNA-directed RNA polymerase III subunit rpc6 (301 aa).

Belongs to the eukaryotic RPC34/RPC39 RNA polymerase subunit family. As to quaternary structure, component of the RNA polymerase III (Pol III) complex consisting of 17 subunits. Interacts with TFIIB.

It is found in the nucleus. Its function is as follows. DNA-dependent RNA polymerase catalyzes the transcription of DNA into RNA using the four ribonucleoside triphosphates as substrates. Specific peripheric component of RNA polymerase III which synthesizes small RNAs, such as 5S rRNA and tRNAs. The polypeptide is Probable DNA-directed RNA polymerase III subunit rpc6 (rpc6) (Schizosaccharomyces pombe (strain 972 / ATCC 24843) (Fission yeast)).